Reading from the N-terminus, the 114-residue chain is uncharacterized protein (114 aa).

3 helical membrane-spanning segments follow: residues 21-41 (LASS…VCLF), 65-85 (GCFS…SALI), and 93-113 (LSVF…ILTD).

It localises to the membrane. This is an uncharacterized protein from Saccharomyces cerevisiae (strain ATCC 204508 / S288c) (Baker's yeast).